Reading from the N-terminus, the 131-residue chain is MDKNLLEAVKFDEKGLVCAIAQDAETKRVLMVAWMNAEALQKTVETGFAHYYSRSRQKQWMKGEESGHTQKVRELRLDCDGDTIVMLIAQNGGIACHTGRESCFYKKWNGGAWETADAVLKDEKEIYGSTH.

Residue D78 participates in Mg(2+) binding. Zn(2+) is bound at residue C79. The Mg(2+) site is built by D80 and D82. Positions 96 and 103 each coordinate Zn(2+).

It belongs to the PRA-CH family. Homodimer. Mg(2+) serves as cofactor. Requires Zn(2+) as cofactor.

The protein localises to the cytoplasm. It catalyses the reaction 1-(5-phospho-beta-D-ribosyl)-5'-AMP + H2O = 1-(5-phospho-beta-D-ribosyl)-5-[(5-phospho-beta-D-ribosylamino)methylideneamino]imidazole-4-carboxamide. It functions in the pathway amino-acid biosynthesis; L-histidine biosynthesis; L-histidine from 5-phospho-alpha-D-ribose 1-diphosphate: step 3/9. Catalyzes the hydrolysis of the adenine ring of phosphoribosyl-AMP. This is Phosphoribosyl-AMP cyclohydrolase from Neisseria gonorrhoeae (strain ATCC 700825 / FA 1090).